The sequence spans 192 residues: uncharacterized protein (192 aa).

One can recognise a Nudix hydrolase domain in the interval 29–160 (HRQAAVLIPI…PLDIYRRGDS (132 aa)). The Nudix box signature appears at 67–89 (GAVDDTDASVIAAALREAEEEVA). Mg(2+) is bound by residues E83 and E87.

Belongs to the Nudix hydrolase family. PCD1 subfamily. The cofactor is Mn(2+). Requires Mg(2+) as cofactor.

In terms of biological role, probably mediates the hydrolysis of some nucleoside diphosphate derivatives. This is an uncharacterized protein from Escherichia coli (strain SMS-3-5 / SECEC).